Reading from the N-terminus, the 497-residue chain is MPNDPSDNQLKTYKETYPKPQVITTSNGAPIYSKTAVLTAGRRGPMLMQDVVYMDEMAHFDRERIPERVVHAKGAGAHGYFEVTHDITKYCKADMFNKVGKQTPLLVRFSTVAGESGSADTVRDPRGFSLKFYTEEGNWDLVGNNTPIFFIRDAIHFPNFIHALKRNPQTHMRDPNALFDFWMNRPESIHQVMFLYSDRGIPDGFRFMNGYGAHTFKMVNKEGNPIYCKFHFKPAQGSKNLDPTDAGKLASSDPDYAIRDLFNAIESRNFPEWKMFIQVMTFEQAEKWEFNPFDVTKVWPHGDYPLIEVGKMVLNRNVKNYFAEVEQAAFCPAHIVPGIEFSPDKMLQGRIFSYTDTHYHRLGPNYIQLPVNCPYRSRAHTTQRDGAMAYESQGDAPNYFPNSFRGYRTRDDVKESTFQTTGDVDRYETGDDHNYEQPRQFWEKVLKEEERDRLVGNLASDLGGCLEEIQNGMVKEFTKVHPDFGNALRHQLCQKKH.

Residues His-71 and Asn-144 contribute to the active site. Tyr-354 is a binding site for heme.

Belongs to the catalase family. Requires heme as cofactor.

The enzyme catalyses 2 H2O2 = O2 + 2 H2O. Its function is as follows. Catalase involved in the oxidative stress response serving to protect cells from toxicity. For instance plays a role in defending against oxidative damage induced by excessive copper stress. Not required for maintaining normal lifespan. The protein is Catalase-2 of Caenorhabditis elegans.